A 414-amino-acid polypeptide reads, in one-letter code: Glycogen synthase (414 aa).

The protein belongs to the glycosyltransferase group 1 family.

The enzyme catalyses [(1-&gt;4)-alpha-D-glucosyl](n) + UDP-alpha-D-glucose = [(1-&gt;4)-alpha-D-glucosyl](n+1) + UDP + H(+). Its pathway is glycan biosynthesis; glycogen biosynthesis. In terms of biological role, glucosyltransferase that uses UDP-glucose as the sugar donor to elongate alpha-(1-&gt;4)-glucans. Is involved in the biosynthesis of both 6-O-methylglucosyl lipopolysaccharides (MGLP) and glycogen. May also use ADP-glucose as substrate. The protein is Glycogen synthase of Mycobacterium tuberculosis (strain CDC 1551 / Oshkosh).